We begin with the raw amino-acid sequence, 1001 residues long: Ulvan lyase, long isoform (1001 aa).

The N-terminal stretch at 1-21 (MNGLKMLLFSTTLLTAFTLHA) is a signal peptide. 126–127 (SH) contributes to the substrate binding site. His-127 (proton donor/acceptor) is an active-site residue. Ca(2+) contacts are provided by Asp-189, Asp-199, and Lys-201. Tyr-280 and Arg-297 together coordinate substrate. Positions 300, 303, and 305 each coordinate Ca(2+). Residue Tyr-361 coordinates substrate.

The protein belongs to the polysaccharide lyase 24 family.

Functionally, ulvan lyase involved in ulvan degradation. Ulvan is the main polysaccharide component of the Ulvales (green seaweed) cell wall. It is composed of disaccharide building blocks comprising 3-sulfated rhamnose (Rha3S) linked to D-glucuronic acid (GlcA), L-iduronic acid (IduA), or D-xylose (Xyl). Ulvan lyase catalyzes preferentially the endolytic cleavage of the glycosidic bond between Rha3S and the uronic acid GlcA, but not IduA, producing oligosaccharides that have unsaturated 4-deoxy-L-threo-hex-4-enopyranosiduronic acid (deltaUA) at the non-reducing end. The most abundant end products in the degradation of the ulvan polysaccharide were deltaUA-Rha3S disaccharides and deltaUA-Rha3S-IduA-Rha3S and deltaUA-Rha3S-Xyl-Rha3S tetrasaccharides. This is Ulvan lyase, long isoform from Pseudoalteromonas sp. (strain PLSV).